Reading from the N-terminus, the 389-residue chain is Chalcone synthase (389 aa).

The active site involves Cys-164.

This sequence belongs to the thiolase-like superfamily. Chalcone/stilbene synthases family.

The enzyme catalyses (E)-4-coumaroyl-CoA + 3 malonyl-CoA + 3 H(+) = 2',4,4',6'-tetrahydroxychalcone + 3 CO2 + 4 CoA. The protein operates within secondary metabolite biosynthesis; flavonoid biosynthesis. The primary product of this enzyme is 4,2',4',6'-tetrahydroxychalcone (also termed naringenin-chalcone or chalcone) which can under specific conditions spontaneously isomerize into naringenin. In Casuarina glauca (Swamp oak), this protein is Chalcone synthase (CHS1).